The sequence spans 424 residues: Light-independent protochlorophyllide reductase subunit N (424 aa).

3 residues coordinate [4Fe-4S] cluster: cysteine 16, cysteine 41, and cysteine 102.

It belongs to the BchN/ChlN family. Protochlorophyllide reductase is composed of three subunits; ChlL, ChlN and ChlB. Forms a heterotetramer of two ChlB and two ChlN subunits. Requires [4Fe-4S] cluster as cofactor.

The enzyme catalyses chlorophyllide a + oxidized 2[4Fe-4S]-[ferredoxin] + 2 ADP + 2 phosphate = protochlorophyllide a + reduced 2[4Fe-4S]-[ferredoxin] + 2 ATP + 2 H2O. The protein operates within porphyrin-containing compound metabolism; chlorophyll biosynthesis (light-independent). Its function is as follows. Component of the dark-operative protochlorophyllide reductase (DPOR) that uses Mg-ATP and reduced ferredoxin to reduce ring D of protochlorophyllide (Pchlide) to form chlorophyllide a (Chlide). This reaction is light-independent. The NB-protein (ChlN-ChlB) is the catalytic component of the complex. The chain is Light-independent protochlorophyllide reductase subunit N from Synechococcus sp. (strain WH7803).